The following is a 254-amino-acid chain: CRISPR-associated endoribonuclease Cas6 1 (254 aa).

Tyr32 functions as the Proton acceptor in the catalytic mechanism. His47 (proton donor) is an active-site residue.

It belongs to the CRISPR-associated protein Cas6/Cse3/CasE family.

Its function is as follows. CRISPR (clustered regularly interspaced short palindromic repeat) is an adaptive immune system that provides protection against mobile genetic elements (viruses, transposable elements and conjugative plasmids). CRISPR clusters contain sequences complementary to antecedent mobile elements and target invading nucleic acids. CRISPR clusters are transcribed and processed into CRISPR RNA (crRNA). This protein processes pre-crRNA into individual crRNA units. The polypeptide is CRISPR-associated endoribonuclease Cas6 1 (cas6a) (Methanocaldococcus jannaschii (strain ATCC 43067 / DSM 2661 / JAL-1 / JCM 10045 / NBRC 100440) (Methanococcus jannaschii)).